Here is a 249-residue protein sequence, read N- to C-terminus: Phosphate import ATP-binding protein PstB 2 (249 aa).

The 241-residue stretch at 4–244 (FEVTHLNLFY…PKDHRTQGYV (241 aa)) folds into the ABC transporter domain. 36–43 (GPSGCGKS) is a binding site for ATP.

It belongs to the ABC transporter superfamily. Phosphate importer (TC 3.A.1.7) family. As to quaternary structure, the complex is composed of two ATP-binding proteins (PstB), two transmembrane proteins (PstC and PstA) and a solute-binding protein (PstS).

It is found in the cell inner membrane. It carries out the reaction phosphate(out) + ATP + H2O = ADP + 2 phosphate(in) + H(+). Its function is as follows. Part of the ABC transporter complex PstSACB involved in phosphate import. Responsible for energy coupling to the transport system. This chain is Phosphate import ATP-binding protein PstB 2, found in Shewanella oneidensis (strain ATCC 700550 / JCM 31522 / CIP 106686 / LMG 19005 / NCIMB 14063 / MR-1).